The primary structure comprises 235 residues: Glucosamine-6-phosphate deaminase (235 aa).

Aspartate 62 serves as the catalytic Proton acceptor; for enolization step. The active-site For ring-opening step is the asparagine 128. Histidine 130 (proton acceptor; for ring-opening step) is an active-site residue. Catalysis depends on glutamate 135, which acts as the For ring-opening step.

The protein belongs to the glucosamine/galactosamine-6-phosphate isomerase family. NagB subfamily.

It catalyses the reaction alpha-D-glucosamine 6-phosphate + H2O = beta-D-fructose 6-phosphate + NH4(+). The protein operates within amino-sugar metabolism; N-acetylneuraminate degradation; D-fructose 6-phosphate from N-acetylneuraminate: step 5/5. In terms of biological role, catalyzes the reversible isomerization-deamination of glucosamine 6-phosphate (GlcN6P) to form fructose 6-phosphate (Fru6P) and ammonium ion. The sequence is that of Glucosamine-6-phosphate deaminase from Lactococcus lactis subsp. lactis (strain IL1403) (Streptococcus lactis).